Reading from the N-terminus, the 426-residue chain is UDP-N-acetylglucosamine 1-carboxyvinyltransferase (426 aa).

22-23 (KN) contacts phosphoenolpyruvate. Arg94 lines the UDP-N-acetyl-alpha-D-glucosamine pocket. The active-site Proton donor is the Cys118. Position 118 is a 2-(S-cysteinyl)pyruvic acid O-phosphothioketal (Cys118). Residues 123 to 127 (RPVDL), Asp309, and Ile331 contribute to the UDP-N-acetyl-alpha-D-glucosamine site.

This sequence belongs to the EPSP synthase family. MurA subfamily.

It localises to the cytoplasm. The enzyme catalyses phosphoenolpyruvate + UDP-N-acetyl-alpha-D-glucosamine = UDP-N-acetyl-3-O-(1-carboxyvinyl)-alpha-D-glucosamine + phosphate. Its pathway is cell wall biogenesis; peptidoglycan biosynthesis. Functionally, cell wall formation. Adds enolpyruvyl to UDP-N-acetylglucosamine. The protein is UDP-N-acetylglucosamine 1-carboxyvinyltransferase of Paracoccus denitrificans (strain Pd 1222).